We begin with the raw amino-acid sequence, 140 residues long: uncharacterized protein (140 aa).

A disordered region spans residues 121–140; the sequence is EEVKNGELIDPNVTTEDEKL.

This is an uncharacterized protein from Schizosaccharomyces pombe (strain 972 / ATCC 24843) (Fission yeast).